The sequence spans 202 residues: Glycerol-3-phosphate acyltransferase (202 aa).

The next 5 helical transmembrane spans lie at 11-31 (LLLFWGGIGYLLGSVPFGMVI), 60-80 (AAAAATLLLDGGKGAAAVLLA), 88-108 (AAQLAGLLAFLGHCFPVWLGF), 117-137 (FLGLMLALAWPVGIACCLTWL), and 162-182 (LLLGAPQAAVLSALLALVILW).

Belongs to the PlsY family. As to quaternary structure, probably interacts with PlsX.

The protein localises to the cell inner membrane. The catalysed reaction is an acyl phosphate + sn-glycerol 3-phosphate = a 1-acyl-sn-glycero-3-phosphate + phosphate. Its pathway is lipid metabolism; phospholipid metabolism. Its function is as follows. Catalyzes the transfer of an acyl group from acyl-phosphate (acyl-PO(4)) to glycerol-3-phosphate (G3P) to form lysophosphatidic acid (LPA). This enzyme utilizes acyl-phosphate as fatty acyl donor, but not acyl-CoA or acyl-ACP. This Ruegeria sp. (strain TM1040) (Silicibacter sp.) protein is Glycerol-3-phosphate acyltransferase.